The chain runs to 259 residues: uncharacterized protein (259 aa).

A coiled-coil region spans residues 158 to 187; sequence VELHLKIIEEDMKETTKKNKEKKQNSQSQE. Residues 172–181 show a composition bias toward basic and acidic residues; the sequence is TTKKNKEKKQ. Disordered regions lie at residues 172-197 and 217-240; these read TTKK…MEVS and PVKK…QLSK. 2 stretches are compositionally biased toward low complexity: residues 182 to 193 and 217 to 226; these read NSQSQEISNSIE and PVKKTSSASK.

This is an uncharacterized protein from Acanthamoeba polyphaga mimivirus (APMV).